The chain runs to 53 residues: uncharacterized protein (53 aa).

The chain crosses the membrane as a helical span at residues 13 to 35; sequence FLLHSFTFPIAHCPSFSWASFFF.

The protein resides in the membrane. This is an uncharacterized protein from Saccharomyces cerevisiae (strain ATCC 204508 / S288c) (Baker's yeast).